Here is a 479-residue protein sequence, read N- to C-terminus: Tegument protein VP16 homolog (479 aa).

This sequence belongs to the herpesviridae tegument protein VP16 protein family. In terms of assembly, associates with the VP16-induced complex; binding to host HCFC1 activates VP16 for association with the octamer motif-binding host protein POU2F1, to form a multiprotein-DNA complex responsible for activating transcription of the viral immediate early genes.

The protein localises to the virion tegument. It localises to the host nucleus. Functionally, transcriptional activator of immediate-early (IE) gene products (alpha genes). Acts as a key activator of lytic infection by initiating the lytic program through the assembly of the transcriptional regulatory VP16-induced complex composed of VP16 and two cellular factors, HCFC1 and POU2F1. VP16-induced complex represents a regulatory switch: when it is on, it promotes IE-gene expression and thus lytic infection, and when it is off, it limits IE-gene transcription favoring latent infection. Its function is as follows. May play a role in the aggregation of tegument proteins around nucleocapsids during virus morphogenesis. This Equus caballus (Horse) protein is Tegument protein VP16 homolog.